The following is a 214-amino-acid chain: MSVSKLNKMQFSDKMSNLALARVTRKCKEVANASDITEAGIHVEIKENNLMDIKGFIKGPEGTPYAGGTFEIKVDIPEHYPFEPPKAKFVTRIWHPNISSQTGTICLDILKDKWTASLTLRTVLLSLQAMLCSPEPSDPQDAVVAKQFINNYPMFTATAVYWTSYFANSKKDVEPDFNRKVGRLIEMGIRETEAIVYLSCNNWKLEQALQFIFD.

The 148-residue stretch at 21–168 folds into the UBC core domain; that stretch reads ARVTRKCKEV…AVYWTSYFAN (148 aa). Catalysis depends on C106, which acts as the Glycyl thioester intermediate. One can recognise a UBA domain in the interval 172-214; that stretch reads DVEPDFNRKVGRLIEMGIRETEAIVYLSCNNWKLEQALQFIFD.

The protein belongs to the ubiquitin-conjugating enzyme family.

The enzyme catalyses S-ubiquitinyl-[E1 ubiquitin-activating enzyme]-L-cysteine + [E2 ubiquitin-conjugating enzyme]-L-cysteine = [E1 ubiquitin-activating enzyme]-L-cysteine + S-ubiquitinyl-[E2 ubiquitin-conjugating enzyme]-L-cysteine.. The protein operates within protein modification; protein ubiquitination. In terms of biological role, acts with E3 ubiquitin-protein ligase trim-21 to catalyze the 'Lys-48'-linked polyubiquitination of ced-1, promoting its proteasomal degradation to maintain appropriate ced-1 levels for apoptotic cell clearance. This is Ubiquitin-conjugating enzyme E2 21 (ubc-21) from Caenorhabditis elegans.